A 557-amino-acid chain; its full sequence is Aerobic glycerol-3-phosphate dehydrogenase (557 aa).

21–49 (DVVIIGGGITGAGIALDASERGMKVALVE) lines the FAD pocket.

It belongs to the FAD-dependent glycerol-3-phosphate dehydrogenase family. The cofactor is FAD.

Its subcellular location is the cytoplasm. It carries out the reaction a quinone + sn-glycerol 3-phosphate = dihydroxyacetone phosphate + a quinol. The protein operates within polyol metabolism; glycerol degradation via glycerol kinase pathway; glycerone phosphate from sn-glycerol 3-phosphate (aerobic route): step 1/1. This chain is Aerobic glycerol-3-phosphate dehydrogenase (glpD), found in Staphylococcus saprophyticus subsp. saprophyticus (strain ATCC 15305 / DSM 20229 / NCIMB 8711 / NCTC 7292 / S-41).